Reading from the N-terminus, the 502-residue chain is Uric acid degradation bifunctional protein (502 aa).

The tract at residues 1–178 (MMRLKQLNEM…NSMTKHKERV (178 aa)) is OHCU decarboxylase. Histidine 68 acts as the Proton donor; for OHCU decarboxylase activity in catalysis. Residues proline 69, 81-85 (SQEEQ), and 116-120 (FVMAV) contribute to the 5-hydroxy-2-oxo-4-ureido-2,5-dihydro-1H-imidazole-5-carboxylate site. Residues 179–502 (MYYGKGDVFA…DEPDHKGALK (324 aa)) are urate oxidase. The active-site Charge relay system; for urate oxidase activity is the lysine 183. The active-site Charge relay system is lysine 194. Residue threonine 243 is the Charge relay system; for urate oxidase activity of the active site. Residues threonine 243, aspartate 244, phenylalanine 354, arginine 371, isoleucine 419, glutamine 420, and asparagine 446 each coordinate urate.

It in the N-terminal section; belongs to the OHCU decarboxylase family. The protein in the C-terminal section; belongs to the uricase family.

The enzyme catalyses 5-hydroxy-2-oxo-4-ureido-2,5-dihydro-1H-imidazole-5-carboxylate + H(+) = (S)-allantoin + CO2. The catalysed reaction is urate + O2 + H2O = 5-hydroxyisourate + H2O2. The protein operates within purine metabolism; urate degradation; (S)-allantoin from urate: step 1/3. It participates in purine metabolism; urate degradation; (S)-allantoin from urate: step 3/3. Catalyzes two steps in the degradation of uric acid, i.e. the oxidation of uric acid to 5-hydroxyisourate (HIU) and the stereoselective decarboxylation of 2-oxo-4-hydroxy-4-carboxy-5-ureidoimidazoline (OHCU) to (S)-allantoin. This chain is Uric acid degradation bifunctional protein (uao), found in Bacillus sp. (strain TB-90).